We begin with the raw amino-acid sequence, 273 residues long: MTTSQLQTEQHQVSDDTAISIQNVTISYGSYEAVKNVYCDVPRGKVTAFIGPSGCGKSTVLRALNRMNDLIEGCSLKGRVLFDGVDLYGASVDPVEVRRRIGMVFQQPNPFPKSIYENIAFGARINGFTGDMDELVERSLRQAAVWDECKDKLNESGYSLSGGQQQRLCIARTIAIQPEVILMDEPCSALDPISTLKIEETMHELKKSFTIVIVTHNMQQAVRVSDMTAFYNAEAVEGGSGKVGYLVEFNETEKIFNSPQQQATQDYVSGRFG.

The ABC transporter domain maps to 19 to 258 (ISIQNVTISY…FNETEKIFNS (240 aa)). ATP is bound at residue 51–58 (GPSGCGKS).

It belongs to the ABC transporter superfamily. Phosphate importer (TC 3.A.1.7) family. In terms of assembly, the complex is composed of two ATP-binding proteins (PstB), two transmembrane proteins (PstC and PstA) and a solute-binding protein (PstS).

It localises to the cell inner membrane. It carries out the reaction phosphate(out) + ATP + H2O = ADP + 2 phosphate(in) + H(+). In terms of biological role, part of the ABC transporter complex PstSACB involved in phosphate import. Responsible for energy coupling to the transport system. This Parasynechococcus marenigrum (strain WH8102) protein is Phosphate import ATP-binding protein PstB.